Here is a 246-residue protein sequence, read N- to C-terminus: ATP synthase subunit a (246 aa).

Residues 1–3 (MFY) constitute a propeptide, removed in mature form. A run of 7 helical transmembrane segments spans residues 20–40 (ILTL…SIIF), 56–76 (WGVA…SQIG), 82–102 (FFPL…ISMI), 112–132 (LVAI…LGLY), 138–158 (FFAL…LVLI), 176–196 (ANIL…VNLM), and 203–223 (FIGG…EVGI).

Belongs to the ATPase A chain family. In terms of assembly, F-type ATPases have 2 components, CF(1) - the catalytic core - and CF(0) - the membrane proton channel. CF(1) has five subunits: alpha(3), beta(3), gamma(1), delta(1), epsilon(1). CF(0) has three main subunits: a, b and c.

Its subcellular location is the mitochondrion inner membrane. Mitochondrial membrane ATP synthase (F(1)F(0) ATP synthase or Complex V) produces ATP from ADP in the presence of a proton gradient across the membrane which is generated by electron transport complexes of the respiratory chain. F-type ATPases consist of two structural domains, F(1) - containing the extramembraneous catalytic core and F(0) - containing the membrane proton channel, linked together by a central stalk and a peripheral stalk. During catalysis, ATP synthesis in the catalytic domain of F(1) is coupled via a rotary mechanism of the central stalk subunits to proton translocation. Key component of the proton channel; it may play a direct role in the translocation of protons across the membrane. The sequence is that of ATP synthase subunit a (ATP6) from Candida albicans (strain SC5314 / ATCC MYA-2876) (Yeast).